The chain runs to 220 residues: Zinc finger protein 36 (220 aa).

A C2H2-type 1 zinc finger spans residues 73-95 (FRCTVCGKAFASYQALGGHKSSH). The disordered stretch occupies residues 90–134 (GHKSSHRKPPSPGDHYGAAAAAQQLASAGDSKEDSASSAAGSTGP). The segment covering 107–117 (AAAAAQQLASA) has biased composition (low complexity). Residues 135 to 157 (HRCTICRRSFATGQALGGHKRCH) form a C2H2-type 2 zinc finger.

Functionally, probable transcription factor involved in abscisic acid (ABA) signaling. Required for the regulation of the cross-talk between NADPH oxidase, hydrogen peroxide and MAP kinase in ABA signaling. Regulates the expression of the NADPH oxidase genes RBOHB and RBOHE, and the MAPK genes MPK1, MPK4, MPK5, MPK7 and MPK14. Regulates ABA-induced hydrogen peroxide production and antioxidant defense. Required for tolerance to water stress and oxidative stress. This Oryza sativa subsp. japonica (Rice) protein is Zinc finger protein 36.